The primary structure comprises 596 residues: Pheromone-processing carboxypeptidase KEX1 (596 aa).

Residues 1–17 form the signal peptide; the sequence is MLGLATTVTLESSGCSS. Residues 18–486 are Lumenal-facing; that stretch reads KMCFRLLCSV…KIAAWEAYYK (469 aa). 2 N-linked (GlcNAc...) asparagine glycosylation sites follow: N54 and N90. S154 is an active-site residue. Residues N177, N367, N372, N404, N412, and N464 are each glycosylated (N-linked (GlcNAc...) asparagine). Positions 447–469 are disordered; sequence SRIDGLKGAPTSVGAHPNSTTAE. Residues 487-507 traverse the membrane as a helical segment; that stretch reads SGEVALVVVAIAASLWGFFIW. The Cytoplasmic segment spans residues 508-596; it reads RSKRREKGLE…QSHAGMGKSR (89 aa). Residues 539–596 form a disordered region; it reads KRRGRMDVESAPRPDEAELETLYNAAEGSDPQDGEENFSDGKGDNEKAQSHAGMGKSR. 2 stretches are compositionally biased toward basic and acidic residues: residues 543–554 and 577–587; these read RMDVESAPRPDE and SDGKGDNEKAQ.

This sequence belongs to the peptidase S10 family.

The protein resides in the golgi apparatus. Its subcellular location is the trans-Golgi network membrane. The enzyme catalyses Preferential release of a C-terminal arginine or lysine residue.. Its function is as follows. Protease with a carboxypeptidase B-like function involved in the C-terminal processing of the lysine and arginine residues from protein precursors. Promotes cell fusion and is involved in the programmed cell death. This Arthroderma benhamiae (strain ATCC MYA-4681 / CBS 112371) (Trichophyton mentagrophytes) protein is Pheromone-processing carboxypeptidase KEX1 (KEX1).